The chain runs to 397 residues: 16-O-methyltransferase bsc6 (397 aa).

D262 is a binding site for S-adenosyl-L-methionine. H302 acts as the Proton acceptor in catalysis.

This sequence belongs to the class I-like SAM-binding methyltransferase superfamily. Cation-independent O-methyltransferase family. The cofactor is S-adenosyl-L-methionine.

It participates in mycotoxin biosynthesis. Its function is as follows. 16-O-methyltransferase; part of the gene cluster that mediates the biosynthesis of the diterpene glucoside brassicicene C. In the first step of the brassicicene C biosynthesis, the bifunctional diterpene synthase bsc8 that possesses both prenyl transferase and terpene cyclase activity, converts isopentenyl diphosphate and dimethylallyl diphosphate into geranylgeranyl diphosphate (GGDP) that is further converted into fusicocca-2,10(14)-diene, the first precursor for brassicicene C. Fusicocca-2,10(14)-diene is then substrate of cytochrome P450 monooxygenase bsc1 for hydroxylation at the C-8 position. Oxidation at C-16 position to aldehyde is then catalyzed by the cytochrome P450 monooyxygenase bsc7, yielding fusicocca-2,10(14)-diene-8-beta,16-diol. Follows the isomerization of the double bond and reduction of aldehyde to alcohol catalyzed by the short-chain dehydrogenase/reductase bsc3 to yield the diol compound fusicocca-1,10(14)-diene-8 beta,16-diol. The next step is the oxidation at the C-3 position of fusicocca-2,10(14)-diene-8-beta,16-diol catalyzed by the alpha-ketoglutarate dependent dioxygenase bsc9, to produce a triol compound. Methylation of the hydroxy group at position 16 is performed by the methyltransferase bsc6. 16-O-methylation is followed by oxidation at the C-13 position to ketone and an alkyl shift of the methyl group leads to brassicicene C. Although the probable acetyltransferase bsc4 is included in the gene cluster, no acetylation reactions are necessary for brassicicene C biosynthesis. However, the fact that brassicicene E, which is a structurally related compound having an acetoxy group at position 12, was previously isolated from another strain of A.brassicicola suggests that the ATCC 96836 strain might also produce a small amount of brassicicene E. In Alternaria brassicicola (Dark leaf spot agent), this protein is 16-O-methyltransferase bsc6.